The sequence spans 314 residues: Ecto-ADP-ribosyltransferase 4 (314 aa).

An N-terminal signal peptide occupies residues 1 to 46; that stretch reads MGPLINRCKKILLPTTVPPATMRIWLLGGPLPFLLLLSGLQRPTEG. 2 disulfides stabilise this stretch: C69–C280 and C182–C231. A TR mART core domain is found at 91–276; sequence KNYFRMWQKA…LQLRSTGNLS (186 aa). Residue N114 is glycosylated (N-linked (GlcNAc...) asparagine). An NAD(+)-binding site is contributed by Y126. N-linked (GlcNAc...) asparagine glycosylation is present at N178. An NAD(+)-binding site is contributed by Q206. A glycan (N-linked (GlcNAc...) asparagine) is linked at N222. NAD(+) is bound at residue S240. N257 and N274 each carry an N-linked (GlcNAc...) asparagine glycan. The GPI-anchor amidated alanine moiety is linked to residue A285. A propeptide spans 286-314 (removed in mature form); sequence SSKKCIPDPIAIASLSFLTSVIIFSKSRV.

This sequence belongs to the Arg-specific ADP-ribosyltransferase family.

The protein localises to the cell membrane. It carries out the reaction L-arginyl-[protein] + NAD(+) = N(omega)-(ADP-D-ribosyl)-L-arginyl-[protein] + nicotinamide + H(+). This chain is Ecto-ADP-ribosyltransferase 4 (ART4), found in Pan troglodytes (Chimpanzee).